The sequence spans 511 residues: GMP synthase [glutamine-hydrolyzing] (511 aa).

Residues 6–196 (LVLVLDFGSQ…VFDVCGCTGD (191 aa)) enclose the Glutamine amidotransferase type-1 domain. Cys-83 (nucleophile) is an active-site residue. Active-site residues include His-170 and Glu-172. The region spanning 197–386 (WSIENFIDME…LGVPDRIVWR (190 aa)) is the GMPS ATP-PPase domain. An ATP-binding site is contributed by 224-230 (SGGVDSS).

As to quaternary structure, homodimer.

It catalyses the reaction XMP + L-glutamine + ATP + H2O = GMP + L-glutamate + AMP + diphosphate + 2 H(+). It functions in the pathway purine metabolism; GMP biosynthesis; GMP from XMP (L-Gln route): step 1/1. In terms of biological role, catalyzes the synthesis of GMP from XMP. This Oceanobacillus iheyensis (strain DSM 14371 / CIP 107618 / JCM 11309 / KCTC 3954 / HTE831) protein is GMP synthase [glutamine-hydrolyzing].